Consider the following 227-residue polypeptide: ATP synthase subunit delta (227 aa).

The protein belongs to the ATPase delta chain family. F-type ATPases have 2 components, F(1) - the catalytic core - and F(0) - the membrane proton channel. F(1) has five subunits: alpha(3), beta(3), gamma(1), delta(1), epsilon(1). F(0) has three main subunits: a(1), b(2) and c(10-14). The alpha and beta chains form an alternating ring which encloses part of the gamma chain. F(1) is attached to F(0) by a central stalk formed by the gamma and epsilon chains, while a peripheral stalk is formed by the delta and b chains.

Its subcellular location is the cell inner membrane. Functionally, f(1)F(0) ATP synthase produces ATP from ADP in the presence of a proton or sodium gradient. F-type ATPases consist of two structural domains, F(1) containing the extramembraneous catalytic core and F(0) containing the membrane proton channel, linked together by a central stalk and a peripheral stalk. During catalysis, ATP synthesis in the catalytic domain of F(1) is coupled via a rotary mechanism of the central stalk subunits to proton translocation. This protein is part of the stalk that links CF(0) to CF(1). It either transmits conformational changes from CF(0) to CF(1) or is implicated in proton conduction. The protein is ATP synthase subunit delta of Rhodopirellula baltica (strain DSM 10527 / NCIMB 13988 / SH1).